A 526-amino-acid chain; its full sequence is MLAKGLCLRSVLVKSCQPFLSPVWQGPGLATGNGAGISSTNSPRSFNEIPSPGDNGWINLYHFLRENGTHRIHYHHMQNFQKYGPIYREKLGNMESVYILDPKDAATLFSCEGPNPERYLVPPWVAYHQYYQRPIGVLFKSSDAWRKDRIVLNQEVMAPDSIKNFVPLLEGVAQDFIKVLHRRIKQQNSGKFSGDISDDLFRFAFESITSVVFGERLGMLEEIVDPESQRFIDAVYQMFHTSVPMLNMPPDLFRLFRTKTWKDHAAAWDVIFSKADEYTQNFYWDLRQKRDFSKYPGVLYSLLGGNKLPFKNIQANITEMLAGGVDTTSMTLQWNLYEMAHNLKVQEMLRAEVLAARRQAQGDMAKMVQLVPLLKASIKETLRLHPISVTLQRYIVNDLVLRNYKIPAKTLVQVASYAMGRESSFFPNPNKFDPTRWLEKSQNTTHFRYLGFGWGVRQCLGRRIAELEMTIFLINVLENFRIEVQSIRDVGTKFNLILMPEKPIFFNFQPLKQDLGSTMPRKGDTV.

Residues 1-36 constitute a mitochondrion transit peptide; the sequence is MLAKGLCLRSVLVKSCQPFLSPVWQGPGLATGNGAG. Residue cysteine 459 coordinates heme.

The protein belongs to the cytochrome P450 family. Interacts with FDX1/adrenodoxin. Heme is required as a cofactor. In terms of tissue distribution, expressed in the kidney where it localizes to the distal convoluted tubule and the thick ascending limb of the loop of Henle (at protein level). In the ovary, highly expressed in interstitial cells (at protein level). Also expressed in adrenal gland and testis.

The protein resides in the mitochondrion inner membrane. The enzyme catalyses 6 reduced [adrenodoxin] + cholesterol + 3 O2 + 6 H(+) = 4-methylpentanal + pregnenolone + 6 oxidized [adrenodoxin] + 4 H2O. It catalyses the reaction 2 reduced [adrenodoxin] + cholesterol + O2 + 2 H(+) = (22R)-hydroxycholesterol + 2 oxidized [adrenodoxin] + H2O. The catalysed reaction is (22R)-hydroxycholesterol + 2 reduced [adrenodoxin] + O2 + 2 H(+) = (20R,22R)-20,22-dihydroxycholesterol + 2 oxidized [adrenodoxin] + H2O. It carries out the reaction (20R,22R)-20,22-dihydroxycholesterol + 2 reduced [adrenodoxin] + O2 + 2 H(+) = 4-methylpentanal + pregnenolone + 2 oxidized [adrenodoxin] + 2 H2O. The protein operates within lipid metabolism; C21-steroid hormone metabolism. Its pathway is steroid metabolism; cholesterol metabolism. In terms of biological role, a cytochrome P450 monooxygenase that catalyzes the side-chain hydroxylation and cleavage of cholesterol to pregnenolone, the precursor of most steroid hormones. Catalyzes three sequential oxidation reactions of cholesterol, namely the hydroxylation at C22 followed with the hydroxylation at C20 to yield 20R,22R-hydroxycholesterol that is further cleaved between C20 and C22 to yield the C21-steroid pregnenolone and 4-methylpentanal. Mechanistically, uses molecular oxygen inserting one oxygen atom into a substrate and reducing the second into a water molecule. Two electrons are provided by NADPH via a two-protein mitochondrial transfer system comprising flavoprotein FDXR (adrenodoxin/ferredoxin reductase) and nonheme iron-sulfur protein FDX1 or FDX2 (adrenodoxin/ferredoxin). This chain is Cholesterol side-chain cleavage enzyme, mitochondrial, found in Rattus norvegicus (Rat).